Reading from the N-terminus, the 240-residue chain is Protein MGARP (240 aa).

Over 1 to 45 the chain is Cytoplasmic; sequence MYLRRAVSKTLALPLRAPPGPAPLRKDASLRWISSNKFPGSSGSN. A helical; Anchor for type IV membrane protein transmembrane segment spans residues 46–64; the sequence is MIYYLVVGVTVSAGGYYTY. Residues 65 to 240 are Mitochondrial intermembrane-facing; that stretch reads KRVTSGKAKR…AGSEAASAQG (176 aa). Positions 72-240 are disordered; sequence AKRSDHVTDL…AGSEAASAQG (169 aa). The span at 73–87 shows a compositional bias: basic and acidic residues; it reads KRSDHVTDLKEKTKA. 2 stretches are compositionally biased toward low complexity: residues 166–183 and 228–240; these read TVETTEVSTETTSEVTST and EACAGSEAASAQG.

In terms of assembly, interacts with RHOT1/Miro-1, RHOT2/Miro-2, TRAK1/OIP106 and TRAK2/GRIF1.

It localises to the mitochondrion. It is found in the mitochondrion outer membrane. The protein localises to the mitochondrion inner membrane. Its function is as follows. Plays a role in the trafficking of mitochondria along microtubules. Regulates the kinesin-mediated axonal transport of mitochondria to nerve terminals along microtubules during hypoxia. Participates in the translocation of TRAK2/GRIF1 from the cytoplasm to the mitochondrion. Also plays a role in steroidogenesis through maintenance of mitochondrial abundance and morphology. Plays an inhibitory role during neocortex development by regulating mitochondrial morphology, distribution and motility in neocortical neurons. In Bos taurus (Bovine), this protein is Protein MGARP (MGARP).